The sequence spans 73 residues: DNA-directed RNA polymerase subunit omega (73 aa).

The protein belongs to the RNA polymerase subunit omega family. In cyanobacteria the RNAP catalytic core is composed of 2 alpha, 1 beta, 1 beta', 1 gamma and 1 omega subunit. When a sigma factor is associated with the core the holoenzyme is formed, which can initiate transcription.

The enzyme catalyses RNA(n) + a ribonucleoside 5'-triphosphate = RNA(n+1) + diphosphate. Functionally, promotes RNA polymerase assembly. Latches the N- and C-terminal regions of the beta' subunit thereby facilitating its interaction with the beta and alpha subunits. This Gloeobacter violaceus (strain ATCC 29082 / PCC 7421) protein is DNA-directed RNA polymerase subunit omega.